The primary structure comprises 290 residues: UPF0761 membrane protein YihY (290 aa).

6 helical membrane passes run 44-64 (LLSL…FPMF), 104-124 (VGAC…DSAL), 140-160 (FAVY…SLAI), 183-203 (IFPL…VPTI), 210-230 (AIVG…GFAL), and 244-264 (VLAV…IVLL).

Belongs to the UPF0761 family.

It localises to the cell inner membrane. This Escherichia coli O127:H6 (strain E2348/69 / EPEC) protein is UPF0761 membrane protein YihY.